Consider the following 434-residue polypeptide: GTPase Obg (434 aa).

The 158-residue stretch at 1 to 158 (MFIDRAKIYV…RWLYLELKLL (158 aa)) folds into the Obg domain. The region spanning 159–328 (ADVGLLGLPN…LLELMEKYVK (170 aa)) is the OBG-type G domain. GTP is bound by residues 165–172 (GLPNAGKS), 190–194 (FTTKT), 211–214 (DIPG), 280–283 (NKID), and 309–311 (SAK). Mg(2+) is bound by residues S172 and T192. In terms of domain architecture, OCT spans 347–425 (KQENKKQEIP…IGNYVFKYNS (79 aa)).

It belongs to the TRAFAC class OBG-HflX-like GTPase superfamily. OBG GTPase family. As to quaternary structure, monomer. Mg(2+) is required as a cofactor.

Its subcellular location is the cytoplasm. An essential GTPase which binds GTP, GDP and possibly (p)ppGpp with moderate affinity, with high nucleotide exchange rates and a fairly low GTP hydrolysis rate. Plays a role in control of the cell cycle, stress response, ribosome biogenesis and in those bacteria that undergo differentiation, in morphogenesis control. The protein is GTPase Obg of Dictyoglomus turgidum (strain DSM 6724 / Z-1310).